We begin with the raw amino-acid sequence, 601 residues long: Elongation factor 4 (601 aa).

In terms of domain architecture, tr-type G spans 6–188; the sequence is NYIRNFSIVA…AIVTQLPSPR (183 aa). Residues 18-23 and 135-138 each bind GTP; these read DHGKST and NKVD.

The protein belongs to the TRAFAC class translation factor GTPase superfamily. Classic translation factor GTPase family. LepA subfamily.

Its subcellular location is the cell inner membrane. It catalyses the reaction GTP + H2O = GDP + phosphate + H(+). Functionally, required for accurate and efficient protein synthesis under certain stress conditions. May act as a fidelity factor of the translation reaction, by catalyzing a one-codon backward translocation of tRNAs on improperly translocated ribosomes. Back-translocation proceeds from a post-translocation (POST) complex to a pre-translocation (PRE) complex, thus giving elongation factor G a second chance to translocate the tRNAs correctly. Binds to ribosomes in a GTP-dependent manner. The polypeptide is Elongation factor 4 (Bartonella henselae (strain ATCC 49882 / DSM 28221 / CCUG 30454 / Houston 1) (Rochalimaea henselae)).